The sequence spans 165 residues: Ribosome maturation factor RimM (165 aa).

The PRC barrel domain maps to 94 to 165; that stretch reads EDEFYIADLN…YVVLNYQREI (72 aa).

This sequence belongs to the RimM family. In terms of assembly, binds ribosomal protein uS19.

It is found in the cytoplasm. Its function is as follows. An accessory protein needed during the final step in the assembly of 30S ribosomal subunit, possibly for assembly of the head region. Essential for efficient processing of 16S rRNA. May be needed both before and after RbfA during the maturation of 16S rRNA. It has affinity for free ribosomal 30S subunits but not for 70S ribosomes. The sequence is that of Ribosome maturation factor RimM from Rickettsia felis (strain ATCC VR-1525 / URRWXCal2) (Rickettsia azadi).